The primary structure comprises 299 residues: Porphobilinogen deaminase (299 aa).

Position 242 is an S-(dipyrrolylmethanemethyl)cysteine (Cys242).

It belongs to the HMBS family. In terms of assembly, monomer. Requires dipyrromethane as cofactor.

The catalysed reaction is 4 porphobilinogen + H2O = hydroxymethylbilane + 4 NH4(+). It participates in porphyrin-containing compound metabolism; protoporphyrin-IX biosynthesis; coproporphyrinogen-III from 5-aminolevulinate: step 2/4. Functionally, tetrapolymerization of the monopyrrole PBG into the hydroxymethylbilane pre-uroporphyrinogen in several discrete steps. The sequence is that of Porphobilinogen deaminase (hemC) from Rickettsia prowazekii (strain Madrid E).